A 2774-amino-acid chain; its full sequence is Teneurin-2 (2774 aa).

In terms of domain architecture, Teneurin N-terminal spans 1–375 (MDVKDRRHRS…KPSKYCSWKC (375 aa)). Over 1-379 (MDVKDRRHRS…YCSWKCAALS (379 aa)) the chain is Cytoplasmic. Ser-90 and Ser-124 each carry phosphoserine. The disordered stretch occupies residues 111–271 (TGSDADSDTE…HHHSSANSLN (161 aa)). A compositionally biased stretch (polar residues) spans 141-155 (SSGLSSRENSALTLT). Phosphothreonine is present on Thr-155. Ser-157 is subject to Phosphoserine. A compositionally biased stretch (basic and acidic residues) spans 159-168 (NENKSDDDNG). A compositionally biased stretch (low complexity) spans 174-188 (TSSSSLLPSAQLPSS). A compositionally biased stretch (polar residues) spans 202-211 (DSNTSHQIMD). Over residues 229–240 (SGPQQASSSGPP) the composition is skewed to low complexity. A helical transmembrane segment spans residues 380 to 400 (AIAAALLLAILLAYFIAMHLL). The Extracellular segment spans residues 401–2774 (GLNWQLQPAD…FLRQNEMGKR (2374 aa)). Residues Asn-443 and Asn-482 are each glycosylated (N-linked (GlcNAc...) asparagine). EGF-like domains follow at residues 575–603 (DCPRNCHGNGECVSGLCHCFPGFLGADCA), 605–634 (AACPVLCSGNGQYSKGTCQCYSGWKGAECD), 636–668 (PMNQCIDPSCGGHGSCIDGNCVCAAGYKGEHCE), 669–701 (EVDCLDPTCSSHGVCVNGECLCSPGWGGLNCEL), 702–735 (ARVQCPDQCSGHGTYLPDSGLCNCDPNWMGPDCS), 738–766 (VCSVDCGTHGVCIGGACRCEEGWTGAACD), 769–797 (VCHPRCIEHGTCKDGKCECREGWNGEHCT), and 808–841 (DGCPDLCNGNGRCTLGQNSWQCVCQTGWRGPGCN). Disulfide bonds link Cys-576-Cys-586, Cys-580-Cys-591, Cys-593-Cys-602, Cys-611-Cys-622, Cys-624-Cys-633, Cys-640-Cys-651, Cys-645-Cys-656, Cys-658-Cys-667, Cys-672-Cys-683, Cys-677-Cys-688, Cys-690-Cys-699, Cys-710-Cys-723, Cys-725-Cys-734, Cys-739-Cys-749, Cys-743-Cys-754, Cys-756-Cys-765, Cys-770-Cys-780, Cys-774-Cys-785, Cys-787-Cys-796, Cys-810-Cys-820, Cys-814-Cys-829, and Cys-831-Cys-840. Residues Asn-925, Asn-948, and Asn-1267 are each glycosylated (N-linked (GlcNAc...) asparagine). NHL repeat units lie at residues 1272–1316 (LELR…VKSL), 1342–1386 (ARCG…NGII), 1401–1452 (LSCD…IAGR), 1474–1501 (LESASAIAISHTGVLYITETDEKKINRL), and 1530–1573 (CYSG…VSKN). Residues 1583–1602 (YEAASPGEQELYVFNADGIH) form a YD 1 repeat. The N-linked (GlcNAc...) asparagine glycan is linked to Asn-1616. YD repeat units follow at residues 1619-1639 (YSADNDVTELIDNNGNSLKIR), 1682-1701 (YDGNTGLLATKSDETGWTTF), and 1702-1724 (YDYDHEGRLTNVTRPTGVVTSLH). 5 N-linked (GlcNAc...) asparagine glycosylation sites follow: Asn-1712, Asn-1749, Asn-1773, Asn-1807, and Asn-1892. YD repeat units follow at residues 1895-1914 (YFFNGRLAGLQRGAMSERTD), 1936-1954 (YLDKSMVLLLQSQRQYIFE), 1955-1975 (YDSSDRLHAVTMPSVARHSMS), 1982-1999 (YIRNIYNPPESNASVIFD), 2000-2021 (YSDDGRILKTSFLGTGRQVFYK), 2022-2039 (YGKLSKLSEIVYDSTAVT), 2042-2062 (YDETTGVLKMVNLQSGGFSCT), 2065-2085 (YRKVGPLVDKQIYRFSEEGMI), 2093-2113 (YHDNSFRIASIKPVISETPLP), 2119-2136 (YDEISGKVEHFGKFGVIY), 2137-2163 (YDINQIITTAVMTLSKHFDTHGRIKEV), 2165-2178 (YEMFRSLMYWMTVQ), 2179-2202 (YDSMGRVIKRELKLGPYANTTKYT), 2205-2225 (YDGDGQLQSVAVNDRPTWRYS), 2226-2246 (YDLNGNLHLLNPGNSARLMPL), 2248-2268 (YDLRDRITRLGDVQYKIDDDG), 2280-2300 (YNSKGLLTRAYNKASGWSVQY), and 2302-2322 (YDGVSRRASYKTNLGHHLQYF). N-linked (GlcNAc...) asparagine glycosylation occurs at Asn-1993. Asn-2197 carries N-linked (GlcNAc...) asparagine glycosylation. An N-linked (GlcNAc...) asparagine glycan is attached at Asn-2337. Residues 2348 to 2389 (YDLQGHLFAMESSSGEEYYVASDNTGTPLAVFSINGLMIKQL) form a YD 23 repeat. N-linked (GlcNAc...) asparagine glycosylation occurs at Asn-2648.

The protein belongs to the tenascin family. Teneurin subfamily. As to quaternary structure, homodimer; disulfide-linked. Heterodimer with either TENM1 or TENM3. May also form heterodimer with TENM4. Interacts with ADGRL1 isoform 2. Derives from the membrane form by proteolytic processing. In terms of processing, derives from the plasma membrane form by proteolytic cleavage and translocates to the nucleus. Homophilic binding of the C-terminal extracellular domain stimulates its proteolytic cleavage and release in the cytoplasmic. Is subjected to rapid degradation by the proteasome pathway. In terms of tissue distribution, expressed in the brain (at protein level).

The protein localises to the cell membrane. It localises to the presynaptic cell membrane. Its subcellular location is the postsynaptic cell membrane. The protein resides in the endoplasmic reticulum. It is found in the golgi apparatus. The protein localises to the synapse. It localises to the cell projection. Its subcellular location is the dendritic spine. The protein resides in the filopodium. It is found in the growth cone. The protein localises to the nucleus. It localises to the PML body. Functionally, involved in neural development, regulating the establishment of proper connectivity within the nervous system. Acts as a ligand of the ADGRL1 and ADGRL3 receptors that are expressed at the surface of adjacent cells. Promotes the formation of filopodia and enlarged growth cone in neuronal cells. Mediates axon guidance and homophilic and heterophilic cell-cell adhesion. May function as a cellular signal transducer. Its function is as follows. Induces gene transcription inhibition. This is Teneurin-2 (Tenm2) from Rattus norvegicus (Rat).